The sequence spans 177 residues: Thymidine kinase (177 aa).

An ATP-binding site is contributed by 11 to 18 (GPMFSGKS). Catalysis depends on E83, which acts as the Proton acceptor. F113 is a substrate binding site. Zn(2+) contacts are provided by C138 and C141. 157 to 161 (IEIIG) contacts substrate. Zn(2+) contacts are provided by C170 and C173.

The protein belongs to the thymidine kinase family. In terms of assembly, homotetramer. Two molecules of substrate bind to each enzyme tetramer.

It catalyses the reaction thymidine + ATP = dTMP + ADP + H(+). Phosphorylates thymidine and thymidine analogs, such as azidothymidine (AZT). Part of the salvage pathway for pyrimidine deoxyribonucleotide synthesis. The chain is Thymidine kinase (OPG101) from Cynomys gunnisoni (Gunnison's prairie dog).